Reading from the N-terminus, the 329-residue chain is Transmembrane protein I329L (329 aa).

Positions 1–31 (MLRVFIFFVFLGSGLTGRIKPQVTCKYFISE) are cleaved as a signal peptide. N-linked (GlcNAc...) asparagine; by host glycosylation is found at Asn32, Asn39, Asn44, Asn76, Asn82, and Asn101. At 32 to 239 (NNTWYKYNVT…NTERYKSCYP (208 aa)) the chain is on the extracellular side. Residues 112-133 (ELKFLDLRYNDLQVIDYNILRK) form an LRR repeat. Asn185 and Asn219 each carry an N-linked (GlcNAc...) asparagine; by host glycan. The cysteines at positions 195 and 237 are disulfide-linked. Residues 240 to 260 (LVFISILCSCISFLFLFICLL) form a helical membrane-spanning segment. At 261 to 329 (RSICKKYSCT…EKKVSCSRRK (69 aa)) the chain is on the cytoplasmic side.

Belongs to the asfivirus I329L family. Highly glycosylated.

It localises to the host endoplasmic reticulum membrane. Its subcellular location is the host Golgi apparatus membrane. Functionally, viral TLR3 homolog that probably prevents TLR3 dimerization and subsequent induction of IFN. Inhibits dsRNA-stimulated activation of NF-kB and IRF3. The polypeptide is Transmembrane protein I329L (Ornithodoros (relapsing fever ticks)).